Consider the following 197-residue polypeptide: Xanthine phosphoribosyltransferase (197 aa).

Positions 20 and 27 each coordinate xanthine. A 5-phospho-alpha-D-ribose 1-diphosphate-binding site is contributed by 128–132 (ANGQA). Residue lysine 156 coordinates xanthine.

The protein belongs to the purine/pyrimidine phosphoribosyltransferase family. Xpt subfamily. In terms of assembly, homodimer.

It is found in the cytoplasm. The catalysed reaction is XMP + diphosphate = xanthine + 5-phospho-alpha-D-ribose 1-diphosphate. Its pathway is purine metabolism; XMP biosynthesis via salvage pathway; XMP from xanthine: step 1/1. Converts the preformed base xanthine, a product of nucleic acid breakdown, to xanthosine 5'-monophosphate (XMP), so it can be reused for RNA or DNA synthesis. This Bacillus thuringiensis (strain Al Hakam) protein is Xanthine phosphoribosyltransferase.